The primary structure comprises 179 residues: Translation initiation factor IF-3 (179 aa).

This sequence belongs to the IF-3 family. As to quaternary structure, monomer.

Its subcellular location is the cytoplasm. IF-3 binds to the 30S ribosomal subunit and shifts the equilibrium between 70S ribosomes and their 50S and 30S subunits in favor of the free subunits, thus enhancing the availability of 30S subunits on which protein synthesis initiation begins. The sequence is that of Translation initiation factor IF-3 from Treponema pallidum (strain Nichols).